The sequence spans 105 residues: Membrane-stabilizing protein A (105 aa).

A helical membrane pass occupies residues 1-21 (MQFYLILLAILYLIVSFISIF). The Cytoplasmic portion of the chain corresponds to 22-29 (KMEVVFTR). A helical membrane pass occupies residues 30 to 50 (ILRIIMGVLLLFVLALTTMSF). Over 51–55 (PKENW) the chain is Extracellular. The helical transmembrane segment at 56–76 (WVFIVLLLLVGNVEVTGFKML) threads the bilayer. The Cytoplasmic portion of the chain corresponds to 77-84 (KKDLKGVN). Residues 85–105 (ILNLMSLFIFVIYFILTIVLF) traverse the membrane as a helical segment.

The protein belongs to the MspA family.

The protein localises to the membrane. Its function is as follows. Plays a role in toxin production, resistance to host innate immune mechanisms, and iron homeostasis. The polypeptide is Membrane-stabilizing protein A (Staphylococcus aureus (strain NCTC 8325 / PS 47)).